The primary structure comprises 922 residues: Autophagy-related protein 9B (922 aa).

Disordered stretches follow at residues 1-22 and 85-144; these read MVRRTGWGGSRRQRGRWGDLGP and TPHN…MGPL. The Cytoplasmic segment spans residues 1-206; sequence MVRRTGWGGS…KIYSYHQRNG (206 aa). Over residues 85–114 the composition is skewed to polar residues; it reads TPHNVLPTPTTPSTQAHPTMIHTSASPSWG. A compositionally biased stretch (low complexity) spans 115–124; the sequence is SHSTPPLASA. Positions 150–153 match the Tyrosine-based sorting signal motif; sequence YERL. Residues 207–227 form a helical membrane-spanning segment; the sequence is FACILLEDVFQLGQFIFIVTF. At 228–275 the chain is on the lumenal side; that stretch reads TTFLLRCVDYNVLFNNQPKNHTRRGPLHSKVTLSDAILPSAQCAEKIH. A helical transmembrane segment spans residues 276–296; that stretch reads DSPLLVFLLVLAAGFWLFQLL. The Cytoplasmic segment spans residues 297–437; the sequence is RSVCNLFSYW…GVLANRWRRT (141 aa). The stretch at 438–458 is an intramembrane region; it reads VLLLAAVNLALSPLVLAWQVL. Over 459–523 the chain is Cytoplasmic; sequence HAFYSHVELL…RAAEPPAPLR (65 aa). A helical transmembrane segment spans residues 524-544; sequence ALLARQLVFFSGALFAALLVL. Residues 545-550 are Lumenal-facing; sequence TIYDED. A helical transmembrane segment spans residues 551 to 571; that stretch reads VLAVEHVLTTMTALGVTATVA. The Cytoplasmic segment spans residues 572-624; sequence RSFIPEEQCQGRSSQLLLQAALAHMHYLPEEPGATGARASSYWQMAQLLQYRA. The stretch at 625 to 645 is an intramembrane region; that stretch reads VSLLEELLSPLLTPLFLLFWF. Residues 646-922 are Cytoplasmic-facing; the sequence is RPRALEIIDF…QKEPLTGPLH (277 aa). The tract at residues 848 to 922 is disordered; it reads ELWGEASASS…QKEPLTGPLH (75 aa). 2 stretches are compositionally biased toward low complexity: residues 854-870 and 877-889; these read SASSPSRPWSSPSQPGS and SWSSDGSSPASSP. The span at 890–899 shows a compositional bias: polar residues; that stretch reads RQQWGTQRAQ.

The protein belongs to the ATG9 family. As to quaternary structure, homotrimer; forms a homotrimer with a central pore that forms a path between the two membrane leaflets. Expressed in heart, brain, and placenta and testis.

It is found in the preautophagosomal structure membrane. The enzyme catalyses a 1,2-diacyl-sn-glycero-3-phosphocholine(in) = a 1,2-diacyl-sn-glycero-3-phosphocholine(out). The catalysed reaction is a 1,2-diacyl-sn-glycero-3-phospho-L-serine(in) = a 1,2-diacyl-sn-glycero-3-phospho-L-serine(out). It catalyses the reaction a 1,2-diacyl-sn-glycero-3-phosphoethanolamine(in) = a 1,2-diacyl-sn-glycero-3-phosphoethanolamine(out). In terms of biological role, phospholipid scramblase involved in autophagy by mediating autophagosomal membrane expansion. Cycles between the preautophagosomal structure/phagophore assembly site (PAS) and the cytoplasmic vesicle pool and supplies membrane for the growing autophagosome. Lipid scramblase activity plays a key role in preautophagosomal structure/phagophore assembly by distributing the phospholipids that arrive through ATG2 (ATG2A or ATG2B) from the cytoplasmic to the luminal leaflet of the bilayer, thereby driving autophagosomal membrane expansion. In addition to autophagy, also plays a role in necrotic cell death. This Mus musculus (Mouse) protein is Autophagy-related protein 9B.